The following is a 96-amino-acid chain: Large ribosomal subunit protein bL28 (96 aa).

The protein belongs to the bacterial ribosomal protein bL28 family.

The chain is Large ribosomal subunit protein bL28 from Leptospira biflexa serovar Patoc (strain Patoc 1 / Ames).